The chain runs to 1088 residues: Platelet-derived growth factor receptor alpha (1088 aa).

Positions 1 to 23 (MGTSQAFLVLSCLLTGPSLIVCQ) are cleaved as a signal peptide. Ig-like C2-type domains are found at residues 24–112 (LLLP…SEIE), 116–200 (IYIY…FKTS), 201–305 (EFNV…KTVT), 318–409 (PTFG…FELS), and 413–516 (PASI…LKLV). Over 24–527 (LLLPSILPNE…PSLRSELTVA (504 aa)) the chain is Extracellular. A disulfide bond links Cys-48 and Cys-99. N-linked (GlcNAc...) asparagine glycans are attached at residues Asn-75, Asn-102, and Asn-178. Cystine bridges form between Cys-149-Cys-188 and Cys-234-Cys-289. N-linked (GlcNAc...) asparagine glycosylation is found at Asn-352, Asn-358, Asn-457, and Asn-467. A disulfide bridge connects residues Cys-434 and Cys-500. Residues 528-548 (AAVLVLLVIVIVSLIVLVVIW) form a helical membrane-spanning segment. Residues 549-1088 (KQKPRYEIRW…SSDLVEDSFL (540 aa)) are Cytoplasmic-facing. Phosphotyrosine; by autocatalysis occurs at positions 571 and 573. One can recognise a Protein kinase domain in the interval 592–953 (LVLGRILGSG…HLSEIVENLL (362 aa)). Residues 598-606 (LGSGAFGKV) and Lys-626 each bind ATP. Phosphotyrosine; by autocatalysis occurs at positions 719, 730, 741, 753, 761, and 767. Residue Asp-817 is the Proton acceptor of the active site. Tyr-848, Tyr-987, and Tyr-1017 each carry phosphotyrosine; by autocatalysis. The segment at 1017-1088 (YIIPLPDIDP…SSDLVEDSFL (72 aa)) is disordered. The segment covering 1040–1058 (SSQTSEESAIETGSSSSTF) has biased composition (polar residues). The span at 1064-1088 (ETIEDIDMMDDIGIDSSDLVEDSFL) shows a compositional bias: acidic residues.

This sequence belongs to the protein kinase superfamily. Tyr protein kinase family. CSF-1/PDGF receptor subfamily. Interacts with homodimeric PDGFA, PDGFB and PDGFC, and with heterodimers formed by PDGFA and PDGFB. Monomer in the absence of bound ligand. Interaction with dimeric PDGFA, PDGFB and/or PDGFC leads to receptor dimerization, where both PDGFRA homodimers and heterodimers with PDGFRB are observed. Interacts (tyrosine phosphorylated) with SHB (via SH2 domain). Interacts (tyrosine phosphorylated) with SHF (via SH2 domain). Interacts (tyrosine phosphorylated) with SRC (via SH2 domain). Interacts (tyrosine phosphorylated) with PIK3R1. Interacts (tyrosine phosphorylated) with PLCG1 (via SH2 domain). Interacts (tyrosine phosphorylated) with CRK, GRB2 and GRB7. Interacts with CD248; this interaction promotes PDGF receptor signaling pathway. In terms of processing, ubiquitinated, leading to its internalization and degradation. Post-translationally, autophosphorylated on tyrosine residues upon ligand binding. Autophosphorylation occurs in trans, i.e. one subunit of the dimeric receptor phosphorylates tyrosine residues on the other subunit. Phosphorylation at Tyr-730 and Tyr-741 is important for interaction with PIK3R1. Phosphorylation at Tyr-719 and Tyr-753 is important for interaction with PTPN11. Phosphorylation at Tyr-761 is important for interaction with CRK. Phosphorylation at Tyr-571 and Tyr-573 is important for interaction with SRC and SRC family members. Phosphorylation at Tyr-987 and Tyr-1017 is important for interaction with PLCG1.

The protein localises to the cell membrane. Its subcellular location is the cell projection. It localises to the cilium. The protein resides in the golgi apparatus. The catalysed reaction is L-tyrosyl-[protein] + ATP = O-phospho-L-tyrosyl-[protein] + ADP + H(+). With respect to regulation, present in an inactive conformation in the absence of bound ligand. Binding of PDGFA and/or PDGFB leads to dimerization and activation by autophosphorylation on tyrosine residues. Inhibited by imatinib, nilotinib and sorafenib. In terms of biological role, tyrosine-protein kinase that acts as a cell-surface receptor for PDGFA, PDGFB and PDGFC and plays an essential role in the regulation of embryonic development, cell proliferation, survival and chemotaxis. Depending on the context, promotes or inhibits cell proliferation and cell migration. Plays an important role in the differentiation of bone marrow-derived mesenchymal stem cells. Required for normal skeleton development and cephalic closure during embryonic development. Required for normal development of the mucosa lining the gastrointestinal tract, and for recruitment of mesenchymal cells and normal development of intestinal villi. Plays a role in cell migration and chemotaxis in wound healing. Plays a role in platelet activation, secretion of agonists from platelet granules, and in thrombin-induced platelet aggregation. Binding of its cognate ligands - homodimeric PDGFA, homodimeric PDGFB, heterodimers formed by PDGFA and PDGFB or homodimeric PDGFC -leads to the activation of several signaling cascades; the response depends on the nature of the bound ligand and is modulated by the formation of heterodimers between PDGFRA and PDGFRB. Phosphorylates PIK3R1, PLCG1, and PTPN11. Activation of PLCG1 leads to the production of the cellular signaling molecules diacylglycerol and inositol 1,4,5-trisphosphate, mobilization of cytosolic Ca(2+) and the activation of protein kinase C. Phosphorylates PIK3R1, the regulatory subunit of phosphatidylinositol 3-kinase, and thereby mediates activation of the AKT1 signaling pathway. Mediates activation of HRAS and of the MAP kinases MAPK1/ERK2 and/or MAPK3/ERK1. Promotes activation of STAT family members STAT1, STAT3 and STAT5A and/or STAT5B. Receptor signaling is down-regulated by protein phosphatases that dephosphorylate the receptor and its down-stream effectors, and by rapid internalization of the activated receptor. In Rattus norvegicus (Rat), this protein is Platelet-derived growth factor receptor alpha (Pdgfra).